Here is a 376-residue protein sequence, read N- to C-terminus: Chaperone protein DnaJ (376 aa).

Residues Asp5–Gly70 enclose the J domain. Residues Gly131–Ser209 form a CR-type zinc finger. Residues Cys144, Cys147, Cys161, Cys164, Cys183, Cys186, Cys197, and Cys200 each contribute to the Zn(2+) site. CXXCXGXG motif repeat units follow at residues Cys144–Gly151, Cys161–Gly168, Cys183–Gly190, and Cys197–Gly204.

This sequence belongs to the DnaJ family. Homodimer. It depends on Zn(2+) as a cofactor.

The protein localises to the cytoplasm. Participates actively in the response to hyperosmotic and heat shock by preventing the aggregation of stress-denatured proteins and by disaggregating proteins, also in an autonomous, DnaK-independent fashion. Unfolded proteins bind initially to DnaJ; upon interaction with the DnaJ-bound protein, DnaK hydrolyzes its bound ATP, resulting in the formation of a stable complex. GrpE releases ADP from DnaK; ATP binding to DnaK triggers the release of the substrate protein, thus completing the reaction cycle. Several rounds of ATP-dependent interactions between DnaJ, DnaK and GrpE are required for fully efficient folding. Also involved, together with DnaK and GrpE, in the DNA replication of plasmids through activation of initiation proteins. The polypeptide is Chaperone protein DnaJ (Yersinia enterocolitica serotype O:8 / biotype 1B (strain NCTC 13174 / 8081)).